We begin with the raw amino-acid sequence, 185 residues long: Ribosome-recycling factor (185 aa).

The protein belongs to the RRF family.

It localises to the cytoplasm. In terms of biological role, responsible for the release of ribosomes from messenger RNA at the termination of protein biosynthesis. May increase the efficiency of translation by recycling ribosomes from one round of translation to another. The protein is Ribosome-recycling factor of Pseudothermotoga lettingae (strain ATCC BAA-301 / DSM 14385 / NBRC 107922 / TMO) (Thermotoga lettingae).